The chain runs to 677 residues: NADPH--cytochrome P450 reductase (677 aa).

An N-acetylglycine modification is found at Gly2. Residues 2–21 (GDSHVDTSSTVSEAVAEEVS) lie on the Lumenal side of the membrane. Residues 22–42 (LFSMTDMILFSLIVGLLTYWF) traverse the membrane as a helical segment. Topologically, residues 43-677 (LFRKKKEEVP…KGRYSLDVWS (635 aa)) are cytoplasmic. Position 63 is a phosphoserine (Ser63). Residues 80–224 (IIVFYGSQTG…DFITWREQFW (145 aa)) form the Flavodoxin-like domain. FMN is bound by residues 86-91 (SQTGTA), 138-141 (ATYG), 173-182 (LGNKTYEHFN), and Asp208. In terms of domain architecture, FAD-binding FR-type spans 279-521 (KNPFLAAVTT…FVRKSQFRLP (243 aa)). Arg298 is a binding site for NADP(+). FAD contacts are provided by residues Arg424, 454-457 (RYYS), 472-474 (CAV), Tyr478, and 488-491 (GVAT). NADP(+) contacts are provided by residues Thr535, 596–597 (SR), 602–606 (KVYVQ), and Asp638. Trp676 serves as a coordination point for FAD.

The protein belongs to the NADPH--cytochrome P450 reductase family. In the N-terminal section; belongs to the flavodoxin family. This sequence in the C-terminal section; belongs to the flavoprotein pyridine nucleotide cytochrome reductase family. FAD is required as a cofactor. Requires FMN as cofactor.

The protein resides in the endoplasmic reticulum membrane. It carries out the reaction 2 oxidized [cytochrome P450] + NADPH = 2 reduced [cytochrome P450] + NADP(+) + H(+). In terms of biological role, this enzyme is required for electron transfer from NADP to cytochrome P450 in microsomes. It can also provide electron transfer to heme oxygenase and cytochrome B5. The polypeptide is NADPH--cytochrome P450 reductase (Homo sapiens (Human)).